The following is a 630-amino-acid chain: Ubiquitin carboxyl-terminal hydrolase MINDY-2 (630 aa).

The interval 1–209 is disordered; it reads MESGPESLQP…RVPEEEEGAA (209 aa). Positions 24-33 are enriched in polar residues; that stretch reads GSPQEGQQET. S94 bears the Phosphoserine mark. 2 stretches are compositionally biased toward low complexity: residues 141-163 and 170-191; these read EESA…SCSD and SPSL…SSEF. The active-site Nucleophile is C267. The Proton acceptor role is filled by H449. A ubiquitin-binding domain (UBD) region spans residues 508–560; sequence GQQDQIDQDYLMALSLQQEQQSQEINWEQIPEGISDLELAKKLQEEEDRRASQ. Over residues 564 to 599 the composition is skewed to low complexity; it reads EQEQAAAAAASASASASASASTQAPQSQPVQASPSS. A disordered region spans residues 564 to 630; sequence EQEQAAAAAA…EKEKNSCVIL (67 aa). Residues 606–630 are compositionally biased toward basic and acidic residues; it reads SERKRKEPREKDKEKEKEKNSCVIL.

Belongs to the MINDY deubiquitinase family. FAM63 subfamily.

The catalysed reaction is Thiol-dependent hydrolysis of ester, thioester, amide, peptide and isopeptide bonds formed by the C-terminal Gly of ubiquitin (a 76-residue protein attached to proteins as an intracellular targeting signal).. Functionally, hydrolase that can remove 'Lys-48'-linked conjugated ubiquitin from proteins. Can also bind to polyubiquitin chains of different linkage types, including 'Lys-6', 'Lys-11', 'Lys-29', 'Lys-33' and 'Lys-63'. May play a regulatory role at the level of protein turnover. This chain is Ubiquitin carboxyl-terminal hydrolase MINDY-2 (MINDY2), found in Bos taurus (Bovine).